The primary structure comprises 276 residues: Dermonecrotic toxin LlSicTox-alphaIV2iv (276 aa).

The active site involves H5. 2 residues coordinate Mg(2+): E25 and D27. Catalysis depends on H41, which acts as the Nucleophile. Cystine bridges form between C45–C51 and C47–C193. D85 lines the Mg(2+) pocket.

The protein belongs to the arthropod phospholipase D family. Class II subfamily. Mg(2+) serves as cofactor. In terms of tissue distribution, expressed by the venom gland.

It localises to the secreted. It catalyses the reaction an N-(acyl)-sphingosylphosphocholine = an N-(acyl)-sphingosyl-1,3-cyclic phosphate + choline. The catalysed reaction is an N-(acyl)-sphingosylphosphoethanolamine = an N-(acyl)-sphingosyl-1,3-cyclic phosphate + ethanolamine. It carries out the reaction a 1-acyl-sn-glycero-3-phosphocholine = a 1-acyl-sn-glycero-2,3-cyclic phosphate + choline. The enzyme catalyses a 1-acyl-sn-glycero-3-phosphoethanolamine = a 1-acyl-sn-glycero-2,3-cyclic phosphate + ethanolamine. Its function is as follows. Dermonecrotic toxins cleave the phosphodiester linkage between the phosphate and headgroup of certain phospholipids (sphingolipid and lysolipid substrates), forming an alcohol (often choline) and a cyclic phosphate. This toxin acts on sphingomyelin (SM). It may also act on ceramide phosphoethanolamine (CPE), lysophosphatidylcholine (LPC) and lysophosphatidylethanolamine (LPE), but not on lysophosphatidylserine (LPS), and lysophosphatidylglycerol (LPG). It acts by transphosphatidylation, releasing exclusively cyclic phosphate products as second products. Induces dermonecrosis, hemolysis, increased vascular permeability, edema, inflammatory response, and platelet aggregation. The polypeptide is Dermonecrotic toxin LlSicTox-alphaIV2iv (Loxosceles laeta (South American recluse spider)).